Reading from the N-terminus, the 201-residue chain is Ciliary microtubule inner protein 2C (201 aa).

It belongs to the CIMIP2 family. Microtubule inner protein component of sperm flagellar doublet microtubules. In terms of tissue distribution, expressed in airway epithelial cells.

The protein resides in the cytoplasm. It is found in the cytoskeleton. The protein localises to the cilium axoneme. Its subcellular location is the flagellum axoneme. Its function is as follows. Microtubule inner protein (MIP) part of the dynein-decorated doublet microtubules (DMTs) in cilia axoneme, which is required for motile cilia beating. Binds to the intra-tubulin interfaces. The sequence is that of Ciliary microtubule inner protein 2C from Homo sapiens (Human).